We begin with the raw amino-acid sequence, 335 residues long: Methionine import ATP-binding protein MetN (335 aa).

The region spanning 2 to 241 (IEFQRLHKSY…PKHVTTRRFV (240 aa)) is the ABC transporter domain. ATP is bound at residue 38 to 45 (GHSGAGKS).

This sequence belongs to the ABC transporter superfamily. Methionine importer (TC 3.A.1.24) family. In terms of assembly, the complex is composed of two ATP-binding proteins (MetN), two transmembrane proteins (MetI) and a solute-binding protein (MetQ).

The protein localises to the cell inner membrane. The catalysed reaction is L-methionine(out) + ATP + H2O = L-methionine(in) + ADP + phosphate + H(+). It carries out the reaction D-methionine(out) + ATP + H2O = D-methionine(in) + ADP + phosphate + H(+). Part of the ABC transporter complex MetNIQ involved in methionine import. Responsible for energy coupling to the transport system. The protein is Methionine import ATP-binding protein MetN of Xanthomonas oryzae pv. oryzae (strain MAFF 311018).